The primary structure comprises 492 residues: Fibroblast growth factor receptor substrate 3 (492 aa).

G2 carries N-myristoyl glycine lipidation. In terms of domain architecture, IRS-type PTB spans 13–115 (VPDNHPTKFK…QCNSINVMEE (103 aa)). 3 disordered regions span residues 153 to 173 (GEGP…RHPS), 338 to 455 (QLGG…SDSY), and 467 to 492 (SNLQ…DLPL).

Binds NTRK1. Binds FGFR1, NGFR, GRB2, PTPN11 and ERK2. In terms of processing, phosphorylated by ULK2 in vitro. Phosphorylated on tyrosine residues upon stimulation by BFGF or NGFB.

It is found in the membrane. Functionally, adapter protein that links FGF and NGF receptors to downstream signaling pathways. Involved in the activation of MAP kinases. Down-regulates ERK2 signaling by interfering with the phosphorylation and nuclear translocation of ERK2. This is Fibroblast growth factor receptor substrate 3 (FRS3) from Homo sapiens (Human).